Reading from the N-terminus, the 182-residue chain is T-cell surface glycoprotein CD3 gamma chain (182 aa).

The first 22 residues, 1 to 22, serve as a signal peptide directing secretion; sequence MEQGKGLAGLFLVISLLQGTMA. Over 23–116 the chain is Extracellular; the sequence is QQKEEKHLVK…CIELNMGTVS (94 aa). Residues 37-94 form the Ig-like domain; it reads QGDGSVLLTCDFNEKTITWLKDGHRISPPNATKSTWNLGNGAKDPRGMYQCRGAKKKS. Residues Cys46 and Cys87 are joined by a disulfide bond. The N-linked (GlcNAc...) asparagine glycan is linked to Asn66. The chain crosses the membrane as a helical span at residues 117–137; sequence GFIFAEIISIFFLAVGVYFIA. Topologically, residues 138-182 are cytoplasmic; that stretch reads GQDGVRQSRASDKQTLLQNEQVYQPLKDREYEQYSRLQGNQVRKK. Ser145 is subject to Phosphoserine. Phosphoserine; by PKC is present on Ser148. The ITAM domain maps to 149-177; that stretch reads DKQTLLQNEQVYQPLKDREYEQYSRLQGN. The Di-leucine motif signature appears at 153 to 154; the sequence is LL.

The TCR-CD3 complex is composed of a CD3D/CD3E and a CD3G/CD3E heterodimers that preferentially associate with TCRalpha and TCRbeta, respectively, to form TCRalpha/CD3E/CD3G and TCRbeta/CD3G/CD3E trimers. In turn, the hexamer interacts with CD3Z homodimer to form the TCR-CD3 complex. Alternatively, TCRalpha and TCRbeta can be replaced by TCRgamma and TCRdelta. Phosphorylated on Tyr residues after T-cell receptor triggering by LCK in association with CD4/CD8. Phosphorylated also by PKC; leading to the TCR complex down-regulation. Post-translationally, phosphorylated on Tyr residues after T-cell receptor triggering by LCK in association with CD4/CD8.

It is found in the cell membrane. Its function is as follows. Part of the TCR-CD3 complex present on T-lymphocyte cell surface that plays an essential role in adaptive immune response. When antigen presenting cells (APCs) activate T-cell receptor (TCR), TCR-mediated signals are transmitted across the cell membrane by the CD3 chains CD3D, CD3E, CD3G and CD3Z. All CD3 chains contain immunoreceptor tyrosine-based activation motifs (ITAMs) in their cytoplasmic domain. Upon TCR engagement, these motifs become phosphorylated by Src family protein tyrosine kinases LCK and FYN, resulting in the activation of downstream signaling pathways. In addition to this role of signal transduction in T-cell activation, CD3G plays an essential role in the dynamic regulation of TCR expression at the cell surface. Indeed, constitutive TCR cycling is dependent on the di-leucine-based (diL) receptor-sorting motif present in CD3G. The polypeptide is T-cell surface glycoprotein CD3 gamma chain (Cd3g) (Rattus norvegicus (Rat)).